The sequence spans 536 residues: Trigger factor (536 aa).

Positions G164–T249 constitute a PPIase FKBP-type domain. The interval I439 to K536 is disordered. A compositionally biased stretch (basic and acidic residues) spans T472 to A502. Low complexity predominate over residues K503–A515. A compositionally biased stretch (basic and acidic residues) spans A516–K525. Residues A527–K536 are compositionally biased toward basic residues.

It belongs to the FKBP-type PPIase family. Tig subfamily.

It is found in the cytoplasm. It catalyses the reaction [protein]-peptidylproline (omega=180) = [protein]-peptidylproline (omega=0). Involved in protein export. Acts as a chaperone by maintaining the newly synthesized protein in an open conformation. Functions as a peptidyl-prolyl cis-trans isomerase. The protein is Trigger factor of Sphingopyxis alaskensis (strain DSM 13593 / LMG 18877 / RB2256) (Sphingomonas alaskensis).